The primary structure comprises 529 residues: AT hook-containing protein attf-4 (529 aa).

Disordered stretches follow at residues 1–39, 131–158, 173–200, and 233–255; these read MLQPPTLTPNANGEEFRGSVSTDRSSASPSNIDEIMEDD, QVVHKDQQNGSSFLPSANKTSENPKPIE, GGGGGKIHTERLSEPARKQSRKVGFPPP, and VSANTSTASPGPSSEGSGDDHLE. 2 stretches are compositionally biased toward polar residues: residues 19–31 and 138–153; these read SVSTDRSSASPSN and QNGSSFLPSANKTSEN. Residues 179–189 show a composition bias toward basic and acidic residues; it reads IHTERLSEPAR. Positions 233 to 248 are enriched in low complexity; that stretch reads VSANTSTASPGPSSEG. A DNA-binding region (a.T hook) is located at residues 307 to 319; that stretch reads GRGRGRPKLIGDE. A disordered region spans residues 436 to 476; it reads LEGGSPPASSSSTATTSTATKTVKQESKNGHQNEENLNVKQ. A compositionally biased stretch (low complexity) spans 443–455; sequence ASSSSTATTSTAT. A compositionally biased stretch (basic and acidic residues) spans 458–469; sequence VKQESKNGHQNE.

The chain is AT hook-containing protein attf-4 from Caenorhabditis elegans.